Consider the following 264-residue polypeptide: Hydroxyethylthiazole kinase (264 aa).

Met-43 lines the substrate pocket. ATP-binding residues include Arg-119 and Thr-165. Substrate is bound at residue Gly-192.

The protein belongs to the Thz kinase family. It depends on Mg(2+) as a cofactor.

It catalyses the reaction 5-(2-hydroxyethyl)-4-methylthiazole + ATP = 4-methyl-5-(2-phosphooxyethyl)-thiazole + ADP + H(+). Its pathway is cofactor biosynthesis; thiamine diphosphate biosynthesis; 4-methyl-5-(2-phosphoethyl)-thiazole from 5-(2-hydroxyethyl)-4-methylthiazole: step 1/1. Functionally, catalyzes the phosphorylation of the hydroxyl group of 4-methyl-5-beta-hydroxyethylthiazole (THZ). The chain is Hydroxyethylthiazole kinase from Anoxybacillus flavithermus (strain DSM 21510 / WK1).